Here is a 414-residue protein sequence, read N- to C-terminus: Thyroid hormone receptor beta-B (414 aa).

Residues 1-59 are modulating; the sequence is MPSSMSVRLFTASAAQRKKIQEGDCCVVLAGKTQGRFILIGAVARVSGYIPSYLDKDEL. NR C4-type zinc fingers lie at residues 60-80 and 98-122; these read CVVCGDKATGYHYRCITCEGC and CKYEGKCVIDKVTRNQCQECRFKKC. Residues 60-134 constitute a DNA-binding region (nuclear receptor); the sequence is CVVCGDKATG…VGMATDLVLD (75 aa). In terms of domain architecture, NR LBD spans 170-414; the sequence is EEWELIQVVT…PPLFLEVFED (245 aa).

This sequence belongs to the nuclear hormone receptor family. NR1 subfamily.

The protein resides in the nucleus. High affinity receptor for triiodothyronine (T3). This chain is Thyroid hormone receptor beta-B (thrb-b), found in Xenopus laevis (African clawed frog).